The sequence spans 479 residues: PRAME family member 19 (479 aa).

Residues 15–38 (QSLLRDQALAISVLDELPRELFPR) form an LRR 1 repeat. The LRR 1; degenerate repeat unit spans residues 97–124 (RWKLQVLEMRDVDENFWTIWSGARPLSC). The stretch at 179–203 (HLCCTKVVNYSMNILNFRNILETVY) is one LRR 2; degenerate repeat. An LRR 3; degenerate repeat occupies 204-230 (PDSIQVLEIWNMCWPCMVAEVSRYLSQ). The stretch at 231–265 (MKNLRKLFISDGCGYLPSFESQGQLVAEFSSVFLR) is one LRR 4; degenerate repeat. LRR repeat units lie at residues 266–291 (LEYLQMLYMRRIRFFEGYLDQLIRCL), 292–323 (KSPLETLALTYGSLDEEDLKCLPWYPSLSQLK), 324–342 (QLNLSHGTLRFIRLEPLRA), 348–375 (AATLQTLFLVDCGIGDSKLRVILPALSR), and 376–400 (CSNLTTFCFHGNDTSMDGLKDLLRH).

This sequence belongs to the PRAME family.

The polypeptide is PRAME family member 19 (Homo sapiens (Human)).